The chain runs to 396 residues: MAKEKFARTKPHVNVGTIGHVDHGKTTLTAAITTVLSAKFGGAAKKYDEIDAAPEEKARGITINTAHVEYETANRHYAHVDCPGHADYVKNMITGAAQMDGAILVCSAADGPMPQTREHILLARQVGVPYVLVFMNKCDMVDDAELLELVEMELRELLSKYDFPGDDTPIIHGSALKALEGDQSEIGEPSIFRLADALDSYIPDPERAIDQPFLMPVEDVFSISGRGTVVTGRVERGIVKVGEEIEIVGIRPTVKTICTGVEMFRKLLDQGQAGDNIGALLRGTKREDVERGQVLCKPGSVKPHTHFTSEVYILSKDEGGRHTPFFNGYRPQFYFRTTDVTGSIELPEGTEMVMPGDNIAMTIKLIAPIAMEEGLRFAIREGGRTVGAGVVAKIIE.

Residues Lys-10 to Glu-206 form the tr-type G domain. Positions Gly-19–Thr-26 are G1. Gly-19 to Thr-26 is a GTP binding site. Thr-26 contributes to the Mg(2+) binding site. The segment at Gly-60 to Asn-64 is G2. The tract at residues Asp-81 to Gly-84 is G3. GTP contacts are provided by residues Asp-81–His-85 and Asn-136–Asp-139. The segment at Asn-136–Asp-139 is G4. The interval Ser-174–Leu-176 is G5.

The protein belongs to the TRAFAC class translation factor GTPase superfamily. Classic translation factor GTPase family. EF-Tu/EF-1A subfamily. As to quaternary structure, monomer.

Its subcellular location is the cytoplasm. It carries out the reaction GTP + H2O = GDP + phosphate + H(+). In terms of biological role, GTP hydrolase that promotes the GTP-dependent binding of aminoacyl-tRNA to the A-site of ribosomes during protein biosynthesis. The chain is Elongation factor Tu from Dechloromonas aromatica (strain RCB).